Consider the following 84-residue polypeptide: Sulfur carrier protein TusA (84 aa).

C19 serves as the catalytic Cysteine persulfide intermediate.

Belongs to the sulfur carrier protein TusA family. Interacts with IscS.

Its subcellular location is the cytoplasm. It participates in tRNA modification. In terms of biological role, sulfur carrier protein involved in sulfur trafficking in the cell. Part of a sulfur-relay system required for 2-thiolation during synthesis of 2-thiouridine of the modified wobble base 5-methylaminomethyl-2-thiouridine (mnm(5)s(2)U) in tRNA. Interacts with IscS and stimulates its cysteine desulfurase activity. Accepts an activated sulfur from IscS, which is then transferred to TusD, and thus determines the direction of sulfur flow from IscS to 2-thiouridine formation. Also appears to be involved in sulfur transfer for the biosynthesis of molybdopterin. In Yersinia enterocolitica serotype O:8 / biotype 1B (strain NCTC 13174 / 8081), this protein is Sulfur carrier protein TusA.